Here is an 882-residue protein sequence, read N- to C-terminus: Liprin-beta-2 (882 aa).

Residues 101–303 (AASNETYQER…DKDRRIEELT (203 aa)) are a coiled coil. Residues serine 328, serine 362, and serine 386 each carry the phosphoserine modification. The tract at residues 339-554 (RKWNTTNKSP…SRTRDTKGQK (216 aa)) is disordered. Residues 388 to 399 (EDLRRESGDKCV) show a composition bias toward basic and acidic residues. 2 stretches are compositionally biased toward polar residues: residues 442–457 (PTASLQPDSSGSSQPK) and 481–495 (SSASSGTESSPQSPV). 2 positions are modified to phosphoserine: serine 502 and serine 518. Positions 502–515 (SPKGIKKFWGKIRR) are enriched in basic residues. 3 SAM domains span residues 564-628 (WSTE…INAK), 636-699 (LDHI…LHVN), and 724-789 (WSNH…KFNA).

Belongs to the liprin family. Liprin-beta subfamily. In terms of assembly, forms homodimers and heterodimers. As to expression, expressed widely. Strong expression in liver, kidney, intestine, heart, lung and testis. Low expression in brain and thymus.

In terms of biological role, may regulate the disassembly of focal adhesions. Did not bind receptor-like tyrosine phosphatases type 2A. The protein is Liprin-beta-2 (Ppfibp2) of Mus musculus (Mouse).